Here is a 432-residue protein sequence, read N- to C-terminus: Neuronal pentraxin-2 (432 aa).

The first 14 residues, 1-14, serve as a signal peptide directing secretion; that stretch reads MLALLTAGVALAVA. Residues Asn149 and Asn190 are each glycosylated (N-linked (GlcNAc...) asparagine). The region spanning 224-425 is the Pentraxin (PTX) domain; sequence DAFKVSLPLR…GASKWPVETC (202 aa). A disulfide bond links Cys254 and Cys314. Residues Asn278, Glu356, Gln357, Asp358, and Gln368 each contribute to the Ca(2+) site. Asn394 carries N-linked (GlcNAc...) asparagine glycosylation.

Homooligomer or heterooligomer (probably pentamer) with neuronal pentraxin receptor (NPTXR). Ca(2+) is required as a cofactor.

The protein resides in the secreted. Functionally, likely to play role in the modification of cellular properties that underlie long-term plasticity. Binds to agar matrix in a calcium-dependent manner. The polypeptide is Neuronal pentraxin-2 (Nptx2) (Rattus norvegicus (Rat)).